A 264-amino-acid polypeptide reads, in one-letter code: Thymidylate synthase (264 aa).

Arg-21 provides a ligand contact to dUMP. His-51 is a binding site for (6R)-5,10-methylene-5,6,7,8-tetrahydrofolate. A dUMP-binding site is contributed by 126–127 (RR). The Nucleophile role is filled by Cys-146. DUMP is bound by residues 166 to 169 (RSAD), Asn-177, and 207 to 209 (HLY). A (6R)-5,10-methylene-5,6,7,8-tetrahydrofolate-binding site is contributed by Asp-169. A (6R)-5,10-methylene-5,6,7,8-tetrahydrofolate-binding site is contributed by Ser-263.

This sequence belongs to the thymidylate synthase family. Bacterial-type ThyA subfamily. In terms of assembly, homodimer.

The protein localises to the cytoplasm. The catalysed reaction is dUMP + (6R)-5,10-methylene-5,6,7,8-tetrahydrofolate = 7,8-dihydrofolate + dTMP. It functions in the pathway pyrimidine metabolism; dTTP biosynthesis. Catalyzes the reductive methylation of 2'-deoxyuridine-5'-monophosphate (dUMP) to 2'-deoxythymidine-5'-monophosphate (dTMP) while utilizing 5,10-methylenetetrahydrofolate (mTHF) as the methyl donor and reductant in the reaction, yielding dihydrofolate (DHF) as a by-product. This enzymatic reaction provides an intracellular de novo source of dTMP, an essential precursor for DNA biosynthesis. The sequence is that of Thymidylate synthase from Neisseria meningitidis serogroup B (strain ATCC BAA-335 / MC58).